The chain runs to 343 residues: L-threonine 3-dehydrogenase (343 aa).

Cys-38 contacts Zn(2+). Catalysis depends on charge relay system residues Thr-40 and His-43. The Zn(2+) site is built by His-63, Glu-64, Cys-93, Cys-96, Cys-99, and Cys-107. NAD(+)-binding positions include Ile-176, Asp-196, Arg-201, 261-263 (LGI), and 286-288 (IAG).

The protein belongs to the zinc-containing alcohol dehydrogenase family. In terms of assembly, homotetramer. Requires Zn(2+) as cofactor.

It is found in the cytoplasm. It carries out the reaction L-threonine + NAD(+) = (2S)-2-amino-3-oxobutanoate + NADH + H(+). Its pathway is amino-acid degradation; L-threonine degradation via oxydo-reductase pathway; glycine from L-threonine: step 1/2. Its function is as follows. Catalyzes the NAD(+)-dependent oxidation of L-threonine to 2-amino-3-ketobutyrate. In Thermus thermophilus (strain ATCC 27634 / DSM 579 / HB8), this protein is L-threonine 3-dehydrogenase.